We begin with the raw amino-acid sequence, 719 residues long: Polyribonucleotide nucleotidyltransferase (719 aa).

The Mg(2+) site is built by aspartate 495 and aspartate 501. The region spanning 562 to 621 (PRRLSFRIDPELIGTVIGPGGRTIKGITERTNTKIDIEDTGIVTVASHDGAAAEEAQKII) is the KH domain. The S1 motif domain occupies 631–699 (GEYFDGKVTR…NRGRINLTLR (69 aa)). The disordered stretch occupies residues 699–719 (RGVPQDGSDPQPTVILPIGES).

Belongs to the polyribonucleotide nucleotidyltransferase family. Requires Mg(2+) as cofactor.

The protein resides in the cytoplasm. It carries out the reaction RNA(n+1) + phosphate = RNA(n) + a ribonucleoside 5'-diphosphate. Functionally, involved in mRNA degradation. Catalyzes the phosphorolysis of single-stranded polyribonucleotides processively in the 3'- to 5'-direction. The polypeptide is Polyribonucleotide nucleotidyltransferase (Synechococcus sp. (strain RCC307)).